The following is a 347-amino-acid chain: Dual specificity mitogen-activated protein kinase kinase mek-1 (347 aa).

Positions Met1–His42 are disordered. Residues Gly10–Gly20 are compositionally biased toward gly residues. The 254-residue stretch at Leu72–Val325 folds into the Protein kinase domain. ATP-binding positions include Ile78–Val86 and Lys99. The Proton acceptor role is filled by Asp193. Phosphoserine occurs at positions 221 and 225.

This sequence belongs to the protein kinase superfamily. STE Ser/Thr protein kinase family. MAP kinase kinase subfamily. As to quaternary structure, interacts with shc-1; the interaction is independent of mek-1 catalytic activity, is constitutive and may facilitate mlk-1-mediated phosphorylation by bringing mlk-1 and mek-1 together. Mg(2+) serves as cofactor. In terms of processing, may be phosphorylated at Ser-221 and/or Ser-225 by mlk-1. Expressed in pharyngeal muscles, uterine endothelial cells, intestine and in neurons of ring ganglia, ventral ganglion and ganglia around anus. Expressed also in hypodermis and body muscles.

The enzyme catalyses L-seryl-[protein] + ATP = O-phospho-L-seryl-[protein] + ADP + H(+). It carries out the reaction L-threonyl-[protein] + ATP = O-phospho-L-threonyl-[protein] + ADP + H(+). It catalyses the reaction L-tyrosyl-[protein] + ATP = O-phospho-L-tyrosyl-[protein] + ADP + H(+). May be activated by phosphorylation at Ser-221 and Ser-225. Dual specificity protein kinase which may phosphorylate kgb-1 and thereby is an essential component of the JNK pathway composed of mlk-1, mek-1 and kgb-1. May also have a synergistic role with sek-1 in phosphorylating pmk-1. Involved in the response to environmental stress including heavy metal ions (Cu(2+) and Cd(2+)), oxidative stress and starvation. In association with sek-1, regulates germline cell apoptosis in response to oxidative, osmotic and heat shock stresses. Involved in resistance to pathogenic bacteria infection. Involved in axon regeneration after injury. This is Dual specificity mitogen-activated protein kinase kinase mek-1 from Caenorhabditis elegans.